The primary structure comprises 333 residues: Biotin synthase (333 aa).

The 230-residue stretch at Tyr40–Arg269 folds into the Radical SAM core domain. 3 residues coordinate [4Fe-4S] cluster: Cys55, Cys59, and Cys62. Residues Cys100, Cys132, Cys192, and Arg264 each coordinate [2Fe-2S] cluster.

The protein belongs to the radical SAM superfamily. Biotin synthase family. Homodimer. [4Fe-4S] cluster is required as a cofactor. It depends on [2Fe-2S] cluster as a cofactor.

It carries out the reaction (4R,5S)-dethiobiotin + (sulfur carrier)-SH + 2 reduced [2Fe-2S]-[ferredoxin] + 2 S-adenosyl-L-methionine = (sulfur carrier)-H + biotin + 2 5'-deoxyadenosine + 2 L-methionine + 2 oxidized [2Fe-2S]-[ferredoxin]. Its pathway is cofactor biosynthesis; biotin biosynthesis; biotin from 7,8-diaminononanoate: step 2/2. Its function is as follows. Catalyzes the conversion of dethiobiotin (DTB) to biotin by the insertion of a sulfur atom into dethiobiotin via a radical-based mechanism. This is Biotin synthase from Synechococcus sp. (strain CC9902).